Here is a 368-residue protein sequence, read N- to C-terminus: ICEBs1 integrase (368 aa).

The Core-binding (CB) domain occupies 61 to 143 (VSFPTLISIY…SLSKIFDTAV (83 aa)). The 199-residue stretch at 164–362 (KKMKFWRPEE…YPNKQKEMAD (199 aa)) folds into the Tyr recombinase domain. Residues R201, K239, H313, R316, and H339 contribute to the active site. Y349 functions as the O-(3'-phospho-DNA)-tyrosine intermediate in the catalytic mechanism.

It belongs to the 'phage' integrase family.

Functionally, putative integrase that is involved in the insertion of the integrative and conjugative element ICEBs1. Required for the excision of ICEBs1 from the donor cell genome and subsequent integration in the recipient cell genome. Appears not to be transferred through the mating pore. Integration of ICEBs1 involves an attachment site in the chromosome, attB, and a site in the circular form of ICEBs1, attICEBs1. In Bacillus subtilis (strain 168), this protein is ICEBs1 integrase (int).